A 233-amino-acid chain; its full sequence is 5'-methylthioadenosine/S-adenosylhomocysteine nucleosidase (233 aa).

The active-site Proton acceptor is the Glu-12. Substrate-binding positions include Gly-78, Ile-152, and 173-174 (ME). Asp-197 serves as the catalytic Proton donor.

The protein belongs to the PNP/UDP phosphorylase family. MtnN subfamily. As to quaternary structure, homodimer.

It catalyses the reaction S-adenosyl-L-homocysteine + H2O = S-(5-deoxy-D-ribos-5-yl)-L-homocysteine + adenine. It carries out the reaction S-methyl-5'-thioadenosine + H2O = 5-(methylsulfanyl)-D-ribose + adenine. The catalysed reaction is 5'-deoxyadenosine + H2O = 5-deoxy-D-ribose + adenine. Its pathway is amino-acid biosynthesis; L-methionine biosynthesis via salvage pathway; S-methyl-5-thio-alpha-D-ribose 1-phosphate from S-methyl-5'-thioadenosine (hydrolase route): step 1/2. In terms of biological role, catalyzes the irreversible cleavage of the glycosidic bond in both 5'-methylthioadenosine (MTA) and S-adenosylhomocysteine (SAH/AdoHcy) to adenine and the corresponding thioribose, 5'-methylthioribose and S-ribosylhomocysteine, respectively. Also cleaves 5'-deoxyadenosine, a toxic by-product of radical S-adenosylmethionine (SAM) enzymes, into 5-deoxyribose and adenine. Thus, is required for in vivo function of the radical SAM enzymes biotin synthase and lipoic acid synthase, that are inhibited by 5'-deoxyadenosine accumulation. The protein is 5'-methylthioadenosine/S-adenosylhomocysteine nucleosidase of Sodalis glossinidius (strain morsitans).